Consider the following 967-residue polypeptide: Isoleucine--tRNA ligase (967 aa).

The short motif at 68-78 is the 'HIGH' region element; the sequence is PYANGTLHMGH. Glu-583 contributes to the L-isoleucyl-5'-AMP binding site. The 'KMSKS' region motif lies at 624 to 628; sequence KMSKS. Residue Lys-627 participates in ATP binding. Zn(2+) contacts are provided by Cys-937, Cys-940, Cys-957, and Cys-960.

It belongs to the class-I aminoacyl-tRNA synthetase family. IleS type 1 subfamily. Monomer. Requires Zn(2+) as cofactor.

The protein localises to the cytoplasm. The catalysed reaction is tRNA(Ile) + L-isoleucine + ATP = L-isoleucyl-tRNA(Ile) + AMP + diphosphate. Functionally, catalyzes the attachment of isoleucine to tRNA(Ile). As IleRS can inadvertently accommodate and process structurally similar amino acids such as valine, to avoid such errors it has two additional distinct tRNA(Ile)-dependent editing activities. One activity is designated as 'pretransfer' editing and involves the hydrolysis of activated Val-AMP. The other activity is designated 'posttransfer' editing and involves deacylation of mischarged Val-tRNA(Ile). This Prochlorococcus marinus (strain NATL2A) protein is Isoleucine--tRNA ligase.